Reading from the N-terminus, the 152-residue chain is Regulatory protein RecX (152 aa).

The protein belongs to the RecX family.

It localises to the cytoplasm. In terms of biological role, modulates RecA activity. This is Regulatory protein RecX from Haemophilus influenzae (strain PittEE).